A 346-amino-acid chain; its full sequence is Holliday junction branch migration complex subunit RuvB (346 aa).

The interval 4–185 is large ATPase domain (RuvB-L); sequence SDRIITASPF…FGIVSRLEFY (182 aa). Residues L24, R25, G66, K69, T70, T71, 132 to 134, R175, Y185, and R222 each bind ATP; that span reads EDY. T70 serves as a coordination point for Mg(2+). The interval 186–256 is small ATPAse domain (RuvB-S); the sequence is TADELGKIVT…VADAALQMLD (71 aa). Residues 259–346 form a head domain (RuvB-H) region; sequence ATGLDVLDRK…TTVPSLFDPD (88 aa). Positions 295, 314, and 319 each coordinate DNA.

It belongs to the RuvB family. As to quaternary structure, homohexamer. Forms an RuvA(8)-RuvB(12)-Holliday junction (HJ) complex. HJ DNA is sandwiched between 2 RuvA tetramers; dsDNA enters through RuvA and exits via RuvB. An RuvB hexamer assembles on each DNA strand where it exits the tetramer. Each RuvB hexamer is contacted by two RuvA subunits (via domain III) on 2 adjacent RuvB subunits; this complex drives branch migration. In the full resolvosome a probable DNA-RuvA(4)-RuvB(12)-RuvC(2) complex forms which resolves the HJ.

The protein localises to the cytoplasm. The enzyme catalyses ATP + H2O = ADP + phosphate + H(+). Functionally, the RuvA-RuvB-RuvC complex processes Holliday junction (HJ) DNA during genetic recombination and DNA repair, while the RuvA-RuvB complex plays an important role in the rescue of blocked DNA replication forks via replication fork reversal (RFR). RuvA specifically binds to HJ cruciform DNA, conferring on it an open structure. The RuvB hexamer acts as an ATP-dependent pump, pulling dsDNA into and through the RuvAB complex. RuvB forms 2 homohexamers on either side of HJ DNA bound by 1 or 2 RuvA tetramers; 4 subunits per hexamer contact DNA at a time. Coordinated motions by a converter formed by DNA-disengaged RuvB subunits stimulates ATP hydrolysis and nucleotide exchange. Immobilization of the converter enables RuvB to convert the ATP-contained energy into a lever motion, pulling 2 nucleotides of DNA out of the RuvA tetramer per ATP hydrolyzed, thus driving DNA branch migration. The RuvB motors rotate together with the DNA substrate, which together with the progressing nucleotide cycle form the mechanistic basis for DNA recombination by continuous HJ branch migration. Branch migration allows RuvC to scan DNA until it finds its consensus sequence, where it cleaves and resolves cruciform DNA. This is Holliday junction branch migration complex subunit RuvB from Nitrosomonas europaea (strain ATCC 19718 / CIP 103999 / KCTC 2705 / NBRC 14298).